A 312-amino-acid polypeptide reads, in one-letter code: Glyoxylate/hydroxypyruvate reductase A (312 aa).

The active site involves arginine 227. Catalysis depends on histidine 275, which acts as the Proton donor.

It belongs to the D-isomer specific 2-hydroxyacid dehydrogenase family. GhrA subfamily.

The protein localises to the cytoplasm. It carries out the reaction glycolate + NADP(+) = glyoxylate + NADPH + H(+). It catalyses the reaction (R)-glycerate + NAD(+) = 3-hydroxypyruvate + NADH + H(+). The enzyme catalyses (R)-glycerate + NADP(+) = 3-hydroxypyruvate + NADPH + H(+). Catalyzes the NADPH-dependent reduction of glyoxylate and hydroxypyruvate into glycolate and glycerate, respectively. In Salmonella typhi, this protein is Glyoxylate/hydroxypyruvate reductase A.